The sequence spans 127 residues: Protein ApaG (127 aa).

The 125-residue stretch at 3–127 (DTNKYRIEVQ…FVLASPRALH (125 aa)) folds into the ApaG domain.

This is Protein ApaG from Dechloromonas aromatica (strain RCB).